Reading from the N-terminus, the 609-residue chain is Phosphoenolpyruvate carboxykinase [GTP] (609 aa).

Substrate is bound by residues Arg-81 and 220–222 (YGG). Residues Lys-229 and His-249 each coordinate Mn(2+). Substrate is bound at residue Ser-271. 272-277 (ACGKTN) is a GTP binding site. Cys-273 is an active-site residue. Asp-296 lines the Mn(2+) pocket. 387-389 (NSR) is a binding site for substrate. Residues Arg-389, Arg-420, and 515–518 (FGEN) each bind GTP.

The protein belongs to the phosphoenolpyruvate carboxykinase [GTP] family. In terms of assembly, monomer. Mn(2+) is required as a cofactor.

The protein localises to the cytoplasm. The enzyme catalyses oxaloacetate + GTP = phosphoenolpyruvate + GDP + CO2. Its pathway is carbohydrate biosynthesis; gluconeogenesis. Catalyzes the conversion of oxaloacetate (OAA) to phosphoenolpyruvate (PEP), the rate-limiting step in the metabolic pathway that produces glucose from lactate and other precursors derived from the citric acid cycle. The polypeptide is Phosphoenolpyruvate carboxykinase [GTP] (Mycobacterium marinum (strain ATCC BAA-535 / M)).